A 735-amino-acid polypeptide reads, in one-letter code: Transcription initiation factor IIF subunit alpha (735 aa).

Disordered stretches follow at residues 1-68 (MSRR…EYAE), 165-263 (EYKK…TANL), 297-323 (NEPE…AKRG), 446-465 (KAVA…NSEV), 471-606 (EEFA…HKEP), and 631-674 (PEGE…EETP). The segment covering 33–54 (RMRMGQNGSNSSSPGVPNGDNS) has biased composition (low complexity). Basic and acidic residues-rich tracts occupy residues 59–68 (VKKDDPEYAE) and 165–174 (EYKKKAEQER). Over residues 175–219 (STPNSGGMNKSGTVSLNNTVKDGSQTPTVDSVTKDNTANGVNSSI) the composition is skewed to polar residues. S198 carries the post-translational modification Phosphoserine. A Phosphothreonine modification is found at T200. Positions 220–238 (PTVTGSSVPPASPTTVSAV) are enriched in low complexity. The segment covering 239–263 (ESNGLSNGSTSAANGLDGNASTANL) has biased composition (polar residues). Composition is skewed to acidic residues over residues 453–465 (AMDE…NSEV) and 471–480 (EEFADDEEAP). Residues 487–500 (QENKESEQRIKKEM) show a composition bias toward basic and acidic residues. The segment covering 513–522 (APSENEEDEL) has biased composition (acidic residues). S515 is subject to Phosphoserine. Basic and acidic residues predominate over residues 523–536 (FGEKKIDEDGERIK). Phosphoserine is present on residues S560, S562, and S571. The span at 564–583 (IENKENESPVKKEEDSDTLS) shows a compositional bias: basic and acidic residues. The span at 584 to 595 (KSKRSSPKKQQK) shows a compositional bias: basic residues. Residues 636 to 654 (NPQTTKAVDSSNNASNTVP) show a composition bias toward polar residues. At S655 the chain carries Phosphoserine.

The protein belongs to the TFIIF alpha subunit family. TFIIF is composed of three different subunits: TFG1/RAP74, TFG2/RAP30 and TAF14. In terms of processing, phosphorylated on Ser and other residues by TAF1 and casein kinase II-like kinases.

Its subcellular location is the nucleus. TFIIF is a general transcription initiation factor that binds to RNA polymerase II. Its functions include the recruitment of RNA polymerase II to the promoter bound DNA-TBP-TFIIB complex, decreasing the affinity of RNA polymerase II for non-specific DNA, allowing for the subsequent recruitment of TFIIE and TFIIH, and facilitating RNA polymerase II elongation. In Saccharomyces cerevisiae (strain ATCC 204508 / S288c) (Baker's yeast), this protein is Transcription initiation factor IIF subunit alpha (TFG1).